Reading from the N-terminus, the 273-residue chain is DNA repair protein RecO (273 aa).

The tract at residues 250–273 (NVGQNPSGKDDLNERRDVDGTGES) is disordered. The span at 257-273 (GKDDLNERRDVDGTGES) shows a compositional bias: basic and acidic residues.

It belongs to the RecO family.

Involved in DNA repair and RecF pathway recombination. The polypeptide is DNA repair protein RecO (Desulfitobacterium hafniense (strain DSM 10664 / DCB-2)).